The chain runs to 352 residues: Ion-translocating oxidoreductase complex subunit D (352 aa).

4 helical membrane passes run 20–40 (IMLL…WFFG), 42–62 (GTLF…AIVL), 69–91 (VASH…SIPP), and 123–143 (PAMI…TSWL). Residue T187 is modified to FMN phosphoryl threonine. 5 helical membrane-spanning segments follow: residues 215-235 (LAGV…VFLL), 242-262 (WHIP…GWLF), 267-287 (LASP…FFIL), 301-321 (LIFG…GGYP), and 322-342 (DGVA…DYYT).

This sequence belongs to the NqrB/RnfD family. The complex is composed of six subunits: RsxA, RsxB, RsxC, RsxD, RsxE and RsxG. The cofactor is FMN.

Its subcellular location is the cell inner membrane. Functionally, part of a membrane-bound complex that couples electron transfer with translocation of ions across the membrane. Required to maintain the reduced state of SoxR. In Salmonella typhi, this protein is Ion-translocating oxidoreductase complex subunit D.